A 378-amino-acid polypeptide reads, in one-letter code: Protein RecA (378 aa).

79–86 serves as a coordination point for ATP; that stretch reads GPESSGKT.

The protein belongs to the RecA family.

Its subcellular location is the cytoplasm. Its function is as follows. Can catalyze the hydrolysis of ATP in the presence of single-stranded DNA, the ATP-dependent uptake of single-stranded DNA by duplex DNA, and the ATP-dependent hybridization of homologous single-stranded DNAs. It interacts with LexA causing its activation and leading to its autocatalytic cleavage. The protein is Protein RecA of Streptococcus pyogenes serotype M2 (strain MGAS10270).